Here is a 245-residue protein sequence, read N- to C-terminus: Adenosylcobinamide-GDP ribazoletransferase (245 aa).

Transmembrane regions (helical) follow at residues 31–51 (FGRA…VLYG), 61–81 (PLLQ…ALHL), 113–133 (AAVV…AALL), 138–158 (PGLL…LFLT), and 192–212 (LAFG…FAWL).

This sequence belongs to the CobS family. Mg(2+) serves as cofactor.

Its subcellular location is the cell inner membrane. It carries out the reaction alpha-ribazole + adenosylcob(III)inamide-GDP = adenosylcob(III)alamin + GMP + H(+). The catalysed reaction is alpha-ribazole 5'-phosphate + adenosylcob(III)inamide-GDP = adenosylcob(III)alamin 5'-phosphate + GMP + H(+). Its pathway is cofactor biosynthesis; adenosylcobalamin biosynthesis; adenosylcobalamin from cob(II)yrinate a,c-diamide: step 7/7. Joins adenosylcobinamide-GDP and alpha-ribazole to generate adenosylcobalamin (Ado-cobalamin). Also synthesizes adenosylcobalamin 5'-phosphate from adenosylcobinamide-GDP and alpha-ribazole 5'-phosphate. The sequence is that of Adenosylcobinamide-GDP ribazoletransferase from Pseudomonas paraeruginosa (strain DSM 24068 / PA7) (Pseudomonas aeruginosa (strain PA7)).